A 1474-amino-acid polypeptide reads, in one-letter code: Adhesion G protein-coupled receptor L1 (1474 aa).

The N-terminal stretch at 1–24 is a signal peptide; the sequence is MARLAAVLWNLCVTAVLVTSATQG. The Extracellular segment spans residues 25–858; that stretch reads LSRAGLPFGL…EIYQGRINEL (834 aa). In terms of domain architecture, SUEL-type lectin spans 40-129; it reads ACEGYPIELR…KYLEVQYDCV (90 aa). 5 cysteine pairs are disulfide-bonded: Cys-41/Cys-71, Cys-50/Cys-128, Cys-83/Cys-115, Cys-96/Cys-102, and Cys-140/Cys-322. Glu-42 contacts alpha-L-rhamnose. Residue Asn-98 is glycosylated (N-linked (GlcNAc...) asparagine). Residue 117–120 coordinates alpha-L-rhamnose; it reads GTYK. In terms of domain architecture, Olfactomedin-like spans 139-398; that stretch reads VCPGTLQKVL…VVRYSLEFGP (260 aa). Residues 400–434 are disordered; it reads DPSAGPATSPPLSTTTTARPTPLTSTASPAATTPL. Positions 405–434 are enriched in low complexity; the sequence is PATSPPLSTTTTARPTPLTSTASPAATTPL. 2 disulfides stabilise this stretch: Cys-480/Cys-515 and Cys-503/Cys-532. Residues Asn-531, Asn-640, Asn-742, Asn-801, Asn-806, and Asn-827 are each glycosylated (N-linked (GlcNAc...) asparagine). In terms of domain architecture, GAIN-B spans 669-851; that stretch reads PARFLAAKEN…AVLMAHREIY (183 aa). Disulfide bonds link Cys-802-Cys-833 and Cys-821-Cys-835. Residues 802–851 are GPS; that stretch reads CSFWNYSERSMLGYWSTQGCRLVESNKTHTTCACSHLTNFAVLMAHREIY. Residues 859-879 form a helical membrane-spanning segment; it reads LLSVITWVGIVISLVCLAICI. Residues 880-893 are Cytoplasmic-facing; the sequence is STFCFLRGLQTDRN. Residues 894 to 914 traverse the membrane as a helical segment; sequence TIHKNLCINLFLAELLFLVGI. At 915–920 the chain is on the extracellular side; that stretch reads DKTQYE. The helical transmembrane segment at 921-941 threads the bilayer; it reads IACPIFAGLLHYFFLAAFSWL. Topologically, residues 942–964 are cytoplasmic; the sequence is CLEGVHLYLLLVEVFESEYSRTK. The helical transmembrane segment at 965–985 threads the bilayer; sequence YYYLGGYCFPALVVGIAAAID. Residues 986–1002 are Extracellular-facing; that stretch reads YRSYGTEKACWLRVDNY. A helical transmembrane segment spans residues 1003–1023; that stretch reads FIWSFIGPVSFVIVVNLVFLM. Residues 1024–1050 lie on the Cytoplasmic side of the membrane; that stretch reads VTLHKMIRSSSVLKPDSSRLDNIKSWA. Residues 1051-1071 traverse the membrane as a helical segment; the sequence is LGAIALLFLLGLTWAFGLLFI. Over 1072 to 1075 the chain is Extracellular; the sequence is NKES. The helical transmembrane segment at 1076–1096 threads the bilayer; it reads VVMAYLFTTFNAFQGVFIFVF. The Cytoplasmic portion of the chain corresponds to 1097 to 1474; the sequence is HCALQKKVHK…DGQMQLVTSL (378 aa). At Arg-1194 the chain carries Omega-N-methylarginine. Residue Ser-1220 is modified to Phosphoserine. Disordered regions lie at residues 1248–1273, 1294–1328, 1360–1429, and 1451–1474; these read FNNSYSLRSGDFPPGDGGPEPPRGRN, RGSSSAAKGPPPPEPPVPPVPGGGGEEEAGGPGGA, ESES…SRPP, and YLAAPGLEGPGPDGDGQMQLVTSL. Composition is skewed to pro residues over residues 1302-1314 and 1408-1420; these read GPPPPEPPVPPVP and ALPPPPPAPPGPP. Ser-1473 is subject to Phosphoserine.

Belongs to the G-protein coupled receptor 2 family. Adhesion G-protein coupled receptor (ADGR) subfamily. In terms of assembly, forms a heterodimer, consisting of a large extracellular region (p120) non-covalently linked to a seven-transmembrane moiety (p85). Interacts with syntaxin and with proteins of the SHANK family via the PDZ domain. Interacts (via extracellular domain) with FLRT1, FLRT2 and FLRT3 (via extracellular domain). Autoproteolytically cleaved into 2 subunits, an extracellular subunit and a seven-transmembrane subunit. This proteolytic processing takes place early in the biosynthetic pathway, either in the endoplasmic reticulum or in the early compartment of the Golgi apparatus.

The protein localises to the cell membrane. It localises to the cell projection. It is found in the axon. The protein resides in the growth cone. Its subcellular location is the synapse. The protein localises to the presynaptic cell membrane. It localises to the synaptosome. Its function is as follows. Calcium-independent receptor of high affinity for alpha-latrotoxin, an excitatory neurotoxin present in black widow spider venom which triggers massive exocytosis from neurons and neuroendocrine cells. Receptor for TENM2 that mediates heterophilic synaptic cell-cell contact and postsynaptic specialization. Receptor probably implicated in the regulation of exocytosis. The sequence is that of Adhesion G protein-coupled receptor L1 from Homo sapiens (Human).